We begin with the raw amino-acid sequence, 442 residues long: Elongation factor 1-alpha (442 aa).

The tr-type G domain occupies 5–228 (KTHINIVVIG…DSVTPPERPV (224 aa)). Residues 14–21 (GHVDSGKS) form a G1 region. 14 to 21 (GHVDSGKS) contributes to the GTP binding site. The interval 70 to 74 (GITID) is G2. Residues 91-94 (DAPG) are G3. Residues 91-95 (DAPGH) and 153-156 (NKMD) contribute to the GTP site. Residues 153–156 (NKMD) form a G4 region. The interval 192–194 (SGF) is G5.

It belongs to the TRAFAC class translation factor GTPase superfamily. Classic translation factor GTPase family. EF-Tu/EF-1A subfamily.

The protein resides in the cytoplasm. Its function is as follows. This protein promotes the GTP-dependent binding of aminoacyl-tRNA to the A-site of ribosomes during protein biosynthesis. This Entamoeba histolytica (strain ATCC 30459 / HM-1:IMSS / ABRM) protein is Elongation factor 1-alpha.